A 589-amino-acid chain; its full sequence is Acyl-CoA ligase SID4 (589 aa).

The PTS2-type peroxisomal targeting signal signature appears at 12–20; it reads RLQQTLNHI. Residues 228–236, 367–372, aspartate 458, and arginine 473 contribute to the ATP site; these read TSGSTGNPK and SSYGLT. Residue threonine 372 coordinates substrate. Residues 481 to 483, lysine 547, and 555 to 557 each bind CoA; these read GGE and FGL. ATP is bound at residue lysine 572.

It belongs to the ATP-dependent AMP-binding enzyme family.

Its subcellular location is the peroxisome. It participates in siderophore biosynthesis. Its function is as follows. Acyl-CoA ligase; part of the gene cluster that mediates the biosynthesis of hydroxamate-containing siderophores that play a critical role in virulence via intracellular iron acquisition during macrophage infection. In Ajellomyces capsulatus (Darling's disease fungus), this protein is Acyl-CoA ligase SID4.